A 363-amino-acid polypeptide reads, in one-letter code: MRHLVLRREGGVKFYAPDPEKYGGIYSAPVFYNPAMEKNRTLSTLLLKAYGKGGLVVCEPLSGTGVRGIRYAVESGVVGKLILNDISKEAVELIKKNLEINGVDAEVYNEDANVLLHKLKDSCDVVDIDPFGSPAPFIHGAFRALKEEGLICATATDTAVLVGRYPRKCLRRYGSVIVKTPFYIEVGLRNLLGYIARVAAAEDYKITPLMSYWEGHYFRVCAYAARGARDADDNFHHIAYIKYERGVRKILHAQSEGSSGPLWVGPLGDPLIINKMSEIGPYQDFLKILAEEYSISAPWFYRLPEFAAGGKSPTLKEAVGVLRAAGIYAVRTHMAPDGFKADGEYGEVLMAFKRYISSAHSLQ.

One can recognise a Trm1 methyltransferase domain in the interval Val5–Phe352. Residues Arg40, Arg67, Asp85, Asp111, and Ala112 each coordinate S-adenosyl-L-methionine.

It belongs to the class I-like SAM-binding methyltransferase superfamily. Trm1 family.

The catalysed reaction is guanosine(26) in tRNA + 2 S-adenosyl-L-methionine = N(2)-dimethylguanosine(26) in tRNA + 2 S-adenosyl-L-homocysteine + 2 H(+). Functionally, dimethylates a single guanine residue at position 26 of a number of tRNAs using S-adenosyl-L-methionine as donor of the methyl groups. This Pyrobaculum aerophilum (strain ATCC 51768 / DSM 7523 / JCM 9630 / CIP 104966 / NBRC 100827 / IM2) protein is tRNA (guanine(26)-N(2))-dimethyltransferase.